The following is a 652-amino-acid chain: Phosphoglucomutase 1, chloroplastic (652 aa).

The transit peptide at 1–84 directs the protein to the chloroplast; that stretch reads MAFSAAASAS…LAARRTLRVR (84 aa). Residues Arg-118 and Ser-211 each coordinate alpha-D-glucose 1,6-bisphosphate. Ser-211 (phosphoserine intermediate) is an active-site residue. Mg(2+) contacts are provided by Ser-211, Asp-376, Asp-378, and Asp-380. Ser-211 is subject to Phosphoserine. Positions 380, 381, 443, 462, 464, and 475 each coordinate alpha-D-glucose 1,6-bisphosphate.

The protein belongs to the phosphohexose mutase family. Mg(2+) is required as a cofactor.

The protein resides in the plastid. Its subcellular location is the chloroplast. It catalyses the reaction alpha-D-glucose 1-phosphate = alpha-D-glucose 6-phosphate. The enzyme catalyses O-phospho-L-seryl-[protein] + alpha-D-glucose 1-phosphate = alpha-D-glucose 1,6-bisphosphate + L-seryl-[protein]. It carries out the reaction alpha-D-glucose 1,6-bisphosphate + L-seryl-[protein] = O-phospho-L-seryl-[protein] + alpha-D-glucose 6-phosphate. Inhibited by the Calvin cycle intermediates fructose-1,6-bisphosphate and ribulose-1,5-bisphosphate. Its function is as follows. Catalyzes the reversible isomerization of alpha-D-glucose 1-phosphate to alpha-D-glucose 6-phosphate. The mechanism proceeds via the intermediate compound alpha-D-glucose 1,6-bisphosphate. This enzyme participates in both the breakdown and synthesis of glucose. Required for sucrose production and accumulation necessary during plant development. Promotes gravitropic responses, negative in shoots but positive in roots, by facilitating starch granules (statoliths) formation. This Marchantia polymorpha (Common liverwort) protein is Phosphoglucomutase 1, chloroplastic.